The following is a 91-amino-acid chain: DNA-directed RNA polymerase subunit omega (91 aa).

It belongs to the RNA polymerase subunit omega family. As to quaternary structure, the RNAP catalytic core consists of 2 alpha, 1 beta, 1 beta' and 1 omega subunit. When a sigma factor is associated with the core the holoenzyme is formed, which can initiate transcription.

The catalysed reaction is RNA(n) + a ribonucleoside 5'-triphosphate = RNA(n+1) + diphosphate. Promotes RNA polymerase assembly. Latches the N- and C-terminal regions of the beta' subunit thereby facilitating its interaction with the beta and alpha subunits. The sequence is that of DNA-directed RNA polymerase subunit omega from Enterobacter sp. (strain 638).